Reading from the N-terminus, the 308-residue chain is MILMKKFEIILFLFIAVLIFVFGYFVGASQPLYSENPVIQYFKNPKPFTVENVNMPVTYYGTICGKYIGYQITPHNVNEEARKCFYKYFKLKDKNPKEAERYLKRGLFLTEYLISQADKETAEVDEKNITFIVWRYNFEFPLYNLSKGWRGALCQAGCLKTLYLAYEATGDERYLNYANLAINAFKVPVEKGGLLKIRIYKNKSYYWFPEYASENPPYVLNGFITATLWIGDFGNKTGNADALYLYKEGLKSIKTFLPMYDAGDWSYYDALGHRCNKHYEHLHRLQMLWLYNKTGDEIYLKYYKKWRE.

The signal sequence occupies residues 1 to 28 (MILMKKFEIILFLFIAVLIFVFGYFVGA).

This is an uncharacterized protein from Methanocaldococcus jannaschii (strain ATCC 43067 / DSM 2661 / JAL-1 / JCM 10045 / NBRC 100440) (Methanococcus jannaschii).